Consider the following 419-residue polypeptide: UDP-N-acetylglucosamine 1-carboxyvinyltransferase (419 aa).

22–23 lines the phosphoenolpyruvate pocket; it reads KN. UDP-N-acetyl-alpha-D-glucosamine is bound at residue R91. C115 (proton donor) is an active-site residue. 2-(S-cysteinyl)pyruvic acid O-phosphothioketal is present on C115. UDP-N-acetyl-alpha-D-glucosamine-binding positions include 120–124, 160–163, D305, and I327; these read RPVDL and KVSV.

The protein belongs to the EPSP synthase family. MurA subfamily.

The protein resides in the cytoplasm. The enzyme catalyses phosphoenolpyruvate + UDP-N-acetyl-alpha-D-glucosamine = UDP-N-acetyl-3-O-(1-carboxyvinyl)-alpha-D-glucosamine + phosphate. The protein operates within cell wall biogenesis; peptidoglycan biosynthesis. Functionally, cell wall formation. Adds enolpyruvyl to UDP-N-acetylglucosamine. The protein is UDP-N-acetylglucosamine 1-carboxyvinyltransferase of Serratia proteamaculans (strain 568).